The primary structure comprises 501 residues: Endosomal/lysosomal proton channel TMEM175 (501 aa).

Residues 1–20 (MAAPRAATPGPGGGARKPEL) are disordered. Over 1-31 (MAAPRAATPGPGGGARKPELDLELGSSTQTS) the chain is Cytoplasmic. Residues 32 to 54 (HRLLAYSDALLSIIATVMILPVA) form a helical membrane-spanning segment. The short motif at 33 to 39 (RLLAYSD) is the RxxxFSD motif 1 element. The Lumenal portion of the chain corresponds to 55 to 75 (HTKIHPDQKLGESVQQLLLTK). Residues 56–61 (TKIHPD) are short helix H1-1. The tract at residues 63–69 (KLGESVQ) is short helix H2-1. A helical transmembrane segment spans residues 76 to 98 (IAVYLMTFLIVTVAWAAHVRLFQ). The Cytoplasmic segment spans residues 99–104 (VIELID). A helical transmembrane segment spans residues 105 to 126 (DVLALLNLACMMIITFLPYTFS). Topologically, residues 127–136 (LMASFPGVPF) are lumenal. Residues 137 to 158 (GIFLFSVCAVVIGLIQAVIVVY) form a helical membrane-spanning segment. Residues 159 to 182 (GFYHPHLLNQQIQVSENQNFYKRH) lie on the Cytoplasmic side of the membrane. The helical transmembrane segment at 183–203 (ILKIILRGPALCFLAAIFSFF) threads the bilayer. Residues 204–208 (FIPLS) are Lumenal-facing. Residues 209 to 228 (YLLLGLVIVFPHLSRFITWC) traverse the membrane as a helical segment. At 229–257 (KTKIVGHRDEEEASYSLETFSFYLSEPLS) the chain is on the cytoplasmic side. A helical transmembrane segment spans residues 258-282 (KERVEAFSDGVYAIVATLLILDICE). Positions 260–266 (RVEAFSD) match the RxxxFSD motif 2 motif. Residues 283 to 309 (DNVPDPREVGEKFHGSLLEALSEYGPN) are Lumenal-facing. A short helix H1-2 region spans residues 288-296 (PREVGEKFH). Positions 298 to 304 (SLLEALS) are short helix H2-2. Residues 310–332 (YLAYFGSFVTIGLLWFVHHSLFL) form a helical membrane-spanning segment. The Cytoplasmic portion of the chain corresponds to 333–338 (YVTKAT). A helical transmembrane segment spans residues 339 to 360 (RLMGLLNILSLAFIGGLPLAYQ). The Lumenal segment spans residues 361-375 (LTSEFAEKSHNEIEA). The chain crosses the membrane as a helical span at residues 376–396 (IQVSCVITFFASIFQFAIWTT). Over 397 to 416 (ALLHERETLHPFARYGGKEH) the chain is Cytoplasmic. A helical membrane pass occupies residues 417-440 (AFMFAKLALYPCVSLGAFFLTCLL). The Lumenal segment spans residues 441–442 (SE). Residues 443-469 (FSTEIFHLMQIVIPFAFLALRIFVRIS) traverse the membrane as a helical segment. At 470-501 (LTVIKSVMSLSRRKVVLLEEEEACLSPTETHS) the chain is on the cytoplasmic side.

This sequence belongs to the TMEM175 family. Homodimer.

It is found in the endosome membrane. The protein localises to the lysosome membrane. The catalysed reaction is H(+)(in) = H(+)(out). It catalyses the reaction K(+)(in) = K(+)(out). With respect to regulation, active at low pH (under pH 4.6): proton channel activity is activated by luminal side protons. Polyunsaturated fatty acids, such as arachidonic acid, also activate the channel activity. Functionally, proton-activated proton channel that catalyzes proton efflux from endosomes and lysosomes to maintain a steady-state pH. Activated at low pH (under pH 4.6) by luminal side protons: selectively mediates lysosomal proton release from lysosomes, eliciting a proton leak that balances V-ATPase activity to maintain pH homeostasis. Regulation of lumenal pH stability is required for autophagosome-lysosome fusion. Also acts as a potassium channel at higher pH, regulating potassium conductance in endosomes and lysosomes. In Gallus gallus (Chicken), this protein is Endosomal/lysosomal proton channel TMEM175.